The sequence spans 417 residues: Serine hydroxymethyltransferase (417 aa).

Residues Leu-121 and 125 to 127 (GHL) contribute to the (6S)-5,6,7,8-tetrahydrofolate site. Lys-230 is modified (N6-(pyridoxal phosphate)lysine). (6S)-5,6,7,8-tetrahydrofolate is bound at residue 355 to 357 (SPF).

This sequence belongs to the SHMT family. As to quaternary structure, homodimer. Pyridoxal 5'-phosphate serves as cofactor.

The protein resides in the cytoplasm. It carries out the reaction (6R)-5,10-methylene-5,6,7,8-tetrahydrofolate + glycine + H2O = (6S)-5,6,7,8-tetrahydrofolate + L-serine. It functions in the pathway one-carbon metabolism; tetrahydrofolate interconversion. The protein operates within amino-acid biosynthesis; glycine biosynthesis; glycine from L-serine: step 1/1. Its function is as follows. Catalyzes the reversible interconversion of serine and glycine with tetrahydrofolate (THF) serving as the one-carbon carrier. This reaction serves as the major source of one-carbon groups required for the biosynthesis of purines, thymidylate, methionine, and other important biomolecules. Also exhibits THF-independent aldolase activity toward beta-hydroxyamino acids, producing glycine and aldehydes, via a retro-aldol mechanism. The polypeptide is Serine hydroxymethyltransferase (Ruthia magnifica subsp. Calyptogena magnifica).